A 340-amino-acid chain; its full sequence is Dual specificity protein phosphatase 12 (340 aa).

M1 carries the post-translational modification N-acetylmethionine. Positions 26–171 constitute a Tyrosine-protein phosphatase domain; sequence QMLEVQPGLY…LKLYQAMGYE (146 aa). The Phosphocysteine intermediate role is filled by C115. 116–121 is a substrate binding site; sequence HAGVSR. S335 carries the post-translational modification Phosphoserine.

The protein belongs to the protein-tyrosine phosphatase family. Non-receptor class dual specificity subfamily. In terms of assembly, monomer. Zn(2+) serves as cofactor. As to expression, ubiquitous, highest expression in spleen, testis, ovary, and peripheral blood leukocytes and lower expression in liver and lung.

Its subcellular location is the nucleus. It localises to the cytoplasm. The protein resides in the cytosol. The enzyme catalyses O-phospho-L-tyrosyl-[protein] + H2O = L-tyrosyl-[protein] + phosphate. The catalysed reaction is O-phospho-L-seryl-[protein] + H2O = L-seryl-[protein] + phosphate. It carries out the reaction O-phospho-L-threonyl-[protein] + H2O = L-threonyl-[protein] + phosphate. In terms of biological role, dual specificity phosphatase; can dephosphorylate both phosphotyrosine and phosphoserine or phosphothreonine residues. Can dephosphorylate glucokinase (in vitro). Has phosphatase activity with the synthetic substrate 6,8-difluoro-4-methylumbelliferyl phosphate and other in vitro substrates. The sequence is that of Dual specificity protein phosphatase 12 (DUSP12) from Homo sapiens (Human).